The primary structure comprises 617 residues: KIF-binding protein (617 aa).

The disordered stretch occupies residues alanine 48 to glycine 83. Serine 174 is modified (phosphoserine).

It belongs to the KIF-binding protein family. As to quaternary structure, interacts with KIF1B; positively regulates KIF1B microtubule motor activity. Interacts with STMN2.

It localises to the cytoplasm. It is found in the cytoskeleton. Functionally, activator of KIF1B plus-end-directed microtubule motor activity. Required for organization of axonal microtubules, and axonal outgrowth and maintenance during peripheral and central nervous system development. This Rattus norvegicus (Rat) protein is KIF-binding protein (Kifbp).